Here is an 88-residue protein sequence, read N- to C-terminus: MRLFLSLPVLVVVLAMVLEGPAPTQAAPEISSTLGRIPDKLKEFGNTLEDKARAAIESIKQSDIPAKTRNWFSETFHKVKEQLKTAFS.

The first 26 residues, 1–26 (MRLFLSLPVLVVVLAMVLEGPAPTQA), serve as a signal peptide directing secretion.

This sequence belongs to the apolipoprotein C1 family.

It is found in the secreted. Functionally, inhibitor of lipoprotein binding to the low density lipoprotein (LDL) receptor, LDL receptor-related protein, and very low density lipoprotein (VLDL) receptor. Associates with high density lipoproteins (HDL) and the triacylglycerol-rich lipoproteins in the plasma and makes up about 10% of the protein of the VLDL and 2% of that of HDL. Appears to interfere directly with fatty acid uptake and is also the major plasma inhibitor of cholesteryl ester transfer protein (CETP). Binds free fatty acids and reduces their intracellular esterification. Modulates the interaction of APOE with beta-migrating VLDL and inhibits binding of beta-VLDL to the LDL receptor-related protein. In Leptonychotes weddellii (Weddell seal), this protein is Apolipoprotein C-I (APOC1).